Reading from the N-terminus, the 101-residue chain is Synaptobrevin-B (101 aa).

Topologically, residues 1-76 are cytoplasmic; the sequence is MSNNPNNSGQ…RRQMWCRNMK (76 aa). Residues 13 to 73 enclose the v-SNARE coiled-coil homology domain; it reads KTQSILQEVD…VTIRRQMWCR (61 aa). A helical; Anchor for type IV membrane protein transmembrane segment spans residues 77–97; it reads LQLIIIAVVILVLAVILIPII. The Vesicular segment spans residues 98–101; it reads MKFV.

Belongs to the synaptobrevin family.

The protein localises to the cytoplasmic vesicle. It is found in the secretory vesicle membrane. In terms of biological role, involved in the targeting and/or fusion of transport vesicles to their target membrane. The sequence is that of Synaptobrevin-B (sybB) from Dictyostelium discoideum (Social amoeba).